The sequence spans 323 residues: MSKFLLYWFVYGVVCSAAYDILKAPNYFEEFVRQYNKQYDSEYEKLRRYKIFQHNLNDIITKNRNDTAVYKINKFSDLSKDETIAKYTGLSLPLHTQNFCEVVVLDRPPGKGPLEFDWRRFNKITSVKNQGMCGACWAFATLASLESQFAIAHDRLINLSEQQMIDCDSVDVGCEGGLLHTAFEAIISMGGVQIENDYPYESSNNYCRMDPTKFVVGVKQCNRYITIYEEKLKDVLRLAGPIPVAIDASDILNYEQGIIKYCANNGLNHAVLLVGYGVENNVPYWILKNSWGTDWGEQGFFKIQQNVNACGIKNELASTAEIN.

Residues 1–18 (MSKFLLYWFVYGVVCSAA) form the signal peptide. Positions 19–112 (YDILKAPNYF…VVLDRPPGKG (94 aa)) are cleaved as a propeptide — activation peptide. 3 disulfide bridges follow: Cys133–Cys174, Cys167–Cys207, and Cys262–Cys310. Cys136 is an active-site residue. N-linked (GlcNAc...) asparagine; by host glycosylation is present at Asn158. Residues His269 and Asn289 contribute to the active site.

It belongs to the peptidase C1 family. In terms of processing, synthesized as an inactive proenzyme and activated by proteolytic removal of the inhibitory propeptide.

It carries out the reaction Endopeptidase of broad specificity, hydrolyzing substrates of both cathepsin L and cathepsin B.. Functionally, cysteine protease that plays an essential role in host liquefaction to facilitate horizontal transmission of the virus. May participate in the degradation of foreign protein expressed by the baculovirus system. This is Viral cathepsin (VCATH) from Lepidoptera (butterflies and moths).